We begin with the raw amino-acid sequence, 660 residues long: Acetyl-coenzyme A synthetase (660 aa).

Residues 197–200 and Thr-317 each bind CoA; that span reads RGGK. Residues 397 to 399, 421 to 426, Asp-512, and Arg-528 each bind ATP; these read GEP and DTFWQT. A CoA-binding site is contributed by Ser-536. Residue Arg-539 coordinates ATP. Positions 550 and 555 each coordinate Mg(2+). Lys-625 is modified (N6-acetyllysine).

The protein belongs to the ATP-dependent AMP-binding enzyme family. Mg(2+) is required as a cofactor. Acetylated. Deacetylation by the SIR2-homolog deacetylase activates the enzyme.

The catalysed reaction is acetate + ATP + CoA = acetyl-CoA + AMP + diphosphate. Its function is as follows. Catalyzes the conversion of acetate into acetyl-CoA (AcCoA), an essential intermediate at the junction of anabolic and catabolic pathways. AcsA undergoes a two-step reaction. In the first half reaction, AcsA combines acetate with ATP to form acetyl-adenylate (AcAMP) intermediate. In the second half reaction, it can then transfer the acetyl group from AcAMP to the sulfhydryl group of CoA, forming the product AcCoA. The protein is Acetyl-coenzyme A synthetase of Cupriavidus pinatubonensis (strain JMP 134 / LMG 1197) (Cupriavidus necator (strain JMP 134)).